The sequence spans 337 residues: Primase homolog protein (337 aa).

Positions 205–304 (SEIIIVEGEP…WLVKWPKKSE (100 aa)) constitute a Toprim domain. Mg(2+) contacts are provided by Glu211, Asp273, and Asp275.

The cofactor is Mg(2+).

In terms of biological role, may act as a DNA primase. The sequence is that of Primase homolog protein from Arabidopsis thaliana (Mouse-ear cress).